Consider the following 420-residue polypeptide: Histidine--tRNA ligase (420 aa).

It belongs to the class-II aminoacyl-tRNA synthetase family. Homodimer.

It is found in the cytoplasm. It catalyses the reaction tRNA(His) + L-histidine + ATP = L-histidyl-tRNA(His) + AMP + diphosphate + H(+). In Nitrosomonas europaea (strain ATCC 19718 / CIP 103999 / KCTC 2705 / NBRC 14298), this protein is Histidine--tRNA ligase.